The following is a 337-amino-acid chain: GDP-mannose transporter 1 (337 aa).

The Cytoplasmic segment spans residues 1–16 (MSELKTGHAGHNPWAS). The chain crosses the membrane as a helical span at residues 17-37 (VANSGPISILSYCGSSILMTV). The Lumenal portion of the chain corresponds to 38-51 (TNKFVVNLKDFNMN). A helical transmembrane segment spans residues 52–72 (FVMLFVQSLVCTITLIILRIL). Topologically, residues 73-92 (GYAKFRSLNKTDAKNWFPIS) are cytoplasmic. A helical membrane pass occupies residues 93–113 (FLLVLMIYTSSKALQYLAVPI). Over 114-119 (YTIFKN) the chain is Lumenal. N-linked (GlcNAc...) asparagine glycosylation is present at N119. A helical transmembrane segment spans residues 120–140 (LTIILIAYGEVLFFGGSVTSM). At 141 to 144 (ELSS) the chain is on the cytoplasmic side. Residues 145 to 165 (FLLMVLSSVVATWGDQQAVAA) traverse the membrane as a helical segment. Residues 166-180 (KAASLAEGAAGAVAS) lie on the Lumenal side of the membrane. A helical membrane pass occupies residues 181-201 (FNPGYFWMFTNCITSALFVLI). Over 202–215 (MRKRIKLTNFKDFD) the chain is Cytoplasmic. The helical transmembrane segment at 216 to 236 (TMFYNNVLALPILLLFSFCVE) threads the bilayer. Topologically, residues 237–252 (DWSSVNLTNNFSNDSL) are lumenal. N-linked (GlcNAc...) asparagine glycosylation is found at N242, N246, and N249. Residues 253-273 (TAMIISGVASVGISYCSGWCV) traverse the membrane as a helical segment. The Cytoplasmic portion of the chain corresponds to 274–279 (RVTSST). Residues 280–300 (TYSMVGALNKLPIALSGLIFF) traverse the membrane as a helical segment. Over 301–304 (DAPR) the chain is Lumenal. Residues 305–325 (NFLSILSIFIGFLSGIIYAVA) form a helical membrane-spanning segment. The Cytoplasmic segment spans residues 326 to 337 (KQKKQQAQPLRK).

Belongs to the TPT transporter family. SLC35D subfamily. In terms of assembly, homooligomer.

Its subcellular location is the golgi apparatus membrane. The protein localises to the cytoplasmic vesicle membrane. The protein resides in the endoplasmic reticulum membrane. Involved in the import of GDP-mannose from the cytoplasm into the Golgi lumen. Defective copy causes severe glycosylation defect and abnormal retention of soluble endoplasmic reticulum proteins. Involved in vanadate sensitivity. In Saccharomyces cerevisiae (strain YJM789) (Baker's yeast), this protein is GDP-mannose transporter 1 (VRG4).